The sequence spans 800 residues: Probable inorganic carbon transporter subunit DabA (800 aa).

Zn(2+) is bound by residues cysteine 329, aspartate 331, histidine 488, and cysteine 503.

The protein belongs to the inorganic carbon transporter (TC 9.A.2) DabA family. In terms of assembly, forms a complex with DabB. Zn(2+) is required as a cofactor.

The protein resides in the cell inner membrane. Its function is as follows. Part of an energy-coupled inorganic carbon pump. The chain is Probable inorganic carbon transporter subunit DabA from Roseobacter denitrificans (strain ATCC 33942 / OCh 114) (Erythrobacter sp. (strain OCh 114)).